A 419-amino-acid chain; its full sequence is L-rhamnose isomerase (419 aa).

Residues histidine 262, aspartate 294, and aspartate 296 each coordinate Mn(2+).

Belongs to the rhamnose isomerase family. As to quaternary structure, homotetramer. Mn(2+) is required as a cofactor.

Its subcellular location is the cytoplasm. The enzyme catalyses L-rhamnopyranose = L-rhamnulose. Its pathway is carbohydrate degradation; L-rhamnose degradation; glycerone phosphate from L-rhamnose: step 1/3. Catalyzes the interconversion of L-rhamnose and L-rhamnulose. The polypeptide is L-rhamnose isomerase (Escherichia coli (strain K12 / MC4100 / BW2952)).